Here is a 56-residue protein sequence, read N- to C-terminus: Large ribosomal subunit protein bL32 (56 aa).

A disordered region spans residues 1–26 (MAVQQNKKSRSKRGMRRSHDALSTAQ). Residues 7–16 (KKSRSKRGMR) are compositionally biased toward basic residues.

This sequence belongs to the bacterial ribosomal protein bL32 family.

This is Large ribosomal subunit protein bL32 from Shewanella amazonensis (strain ATCC BAA-1098 / SB2B).